We begin with the raw amino-acid sequence, 542 residues long: GMP synthase [glutamine-hydrolyzing] (542 aa).

The Glutamine amidotransferase type-1 domain occupies 28-218 (MLVILDFGSQ…VYHICQCEPT (191 aa)). Cysteine 105 (nucleophile) is an active-site residue. Residues histidine 192 and glutamate 194 contribute to the active site. Positions 219–417 (WTTEAFVEES…IGLPEEIVRR (199 aa)) constitute a GMPS ATP-PPase domain. 246 to 252 (SGGVDSS) is an ATP binding site.

As to quaternary structure, homodimer.

It carries out the reaction XMP + L-glutamine + ATP + H2O = GMP + L-glutamate + AMP + diphosphate + 2 H(+). The protein operates within purine metabolism; GMP biosynthesis; GMP from XMP (L-Gln route): step 1/1. Its function is as follows. Catalyzes the synthesis of GMP from XMP. This is GMP synthase [glutamine-hydrolyzing] from Rippkaea orientalis (strain PCC 8801 / RF-1) (Cyanothece sp. (strain PCC 8801)).